The sequence spans 348 residues: Putative agmatine deiminase (348 aa).

C335 functions as the Amidino-cysteine intermediate in the catalytic mechanism.

Belongs to the agmatine deiminase family.

It carries out the reaction agmatine + H2O = N-carbamoylputrescine + NH4(+). The sequence is that of Putative agmatine deiminase from Legionella pneumophila subsp. pneumophila (strain Philadelphia 1 / ATCC 33152 / DSM 7513).